Reading from the N-terminus, the 278-residue chain is MEPRAADGCFLGDVGFWVERTPVHEAAQRGESLQLQQLIESGACVNQVTVDSITPLHAASLQGQARCVQLLLAAGAQVDARNIDGSTPLCDACASGSIECVKLLLSYGAKVNPPLYTASPLHEACMSGSSECVRLLIDVGANLEAHDCHFGTPLHVACAREHLDCVKVLLNAGANVNAAKLHETALHHAAKVKNVDLIEMLIEFGGNIYARDNRGKKPSDYTWSSSAPAKCFEYYEKTPLTLSQLCRVNLRKATGVRGLEKIAKLNIPPRLIDYLSYN.

6 ANK repeats span residues 18–47, 51–80, 84–113, 116–145, 149–178, and 181–210; these read VERT…CVNQ, DSIT…QVDA, DGST…KVNP, YTAS…NLEA, HFGT…NVNA, and LHET…NIYA. The 50-residue stretch at 229 to 278 folds into the SOCS box domain; sequence AKCFEYYEKTPLTLSQLCRVNLRKATGVRGLEKIAKLNIPPRLIDYLSYN.

Belongs to the ankyrin SOCS box (ASB) family.

It functions in the pathway protein modification; protein ubiquitination. Functionally, may be a substrate-recognition component of a SCF-like ECS (Elongin-Cullin-SOCS-box protein) E3 ubiquitin-protein ligase complex which mediates the ubiquitination and subsequent proteasomal degradation of target proteins. The polypeptide is Ankyrin repeat and SOCS box protein 13 (ASB13) (Homo sapiens (Human)).